A 342-amino-acid polypeptide reads, in one-letter code: S-adenosylmethionine:tRNA ribosyltransferase-isomerase (342 aa).

This sequence belongs to the QueA family. Monomer.

The protein localises to the cytoplasm. The catalysed reaction is 7-aminomethyl-7-carbaguanosine(34) in tRNA + S-adenosyl-L-methionine = epoxyqueuosine(34) in tRNA + adenine + L-methionine + 2 H(+). The protein operates within tRNA modification; tRNA-queuosine biosynthesis. In terms of biological role, transfers and isomerizes the ribose moiety from AdoMet to the 7-aminomethyl group of 7-deazaguanine (preQ1-tRNA) to give epoxyqueuosine (oQ-tRNA). This chain is S-adenosylmethionine:tRNA ribosyltransferase-isomerase, found in Streptococcus pneumoniae (strain Hungary19A-6).